Reading from the N-terminus, the 111-residue chain is Pyrimidine/purine nucleoside phosphorylase 1 (111 aa).

The protein belongs to the nucleoside phosphorylase PpnP family.

It catalyses the reaction a purine D-ribonucleoside + phosphate = a purine nucleobase + alpha-D-ribose 1-phosphate. The enzyme catalyses adenosine + phosphate = alpha-D-ribose 1-phosphate + adenine. It carries out the reaction cytidine + phosphate = cytosine + alpha-D-ribose 1-phosphate. The catalysed reaction is guanosine + phosphate = alpha-D-ribose 1-phosphate + guanine. It catalyses the reaction inosine + phosphate = alpha-D-ribose 1-phosphate + hypoxanthine. The enzyme catalyses thymidine + phosphate = 2-deoxy-alpha-D-ribose 1-phosphate + thymine. It carries out the reaction uridine + phosphate = alpha-D-ribose 1-phosphate + uracil. The catalysed reaction is xanthosine + phosphate = alpha-D-ribose 1-phosphate + xanthine. Its function is as follows. Catalyzes the phosphorolysis of diverse nucleosides, yielding D-ribose 1-phosphate and the respective free bases. Can use uridine, adenosine, guanosine, cytidine, thymidine, inosine and xanthosine as substrates. Also catalyzes the reverse reactions. The protein is Pyrimidine/purine nucleoside phosphorylase 1 of Psychrobacter arcticus (strain DSM 17307 / VKM B-2377 / 273-4).